Here is a 227-residue protein sequence, read N- to C-terminus: Acyl-protein thioesterase 1 (227 aa).

Active-site charge relay system residues include S119, D173, and H207.

This sequence belongs to the AB hydrolase superfamily. AB hydrolase 2 family.

Its subcellular location is the cytoplasm. The protein localises to the nucleus. The enzyme catalyses S-hexadecanoyl-L-cysteinyl-[protein] + H2O = L-cysteinyl-[protein] + hexadecanoate + H(+). Functionally, hydrolyzes fatty acids from S-acylated cysteine residues in proteins with a strong preference for palmitoylated G-alpha proteins over other acyl substrates. Mediates the deacylation of G-alpha proteins such as GPA1 in vivo, but has weak or no activity toward palmitoylated Ras proteins. Has weak lysophospholipase activity in vitro; however such activity may not exist in vivo. This Saccharomyces cerevisiae (strain ATCC 204508 / S288c) (Baker's yeast) protein is Acyl-protein thioesterase 1.